We begin with the raw amino-acid sequence, 142 residues long: Ribosome-binding factor A (142 aa).

The segment at 119–142 (EAKQKQHGVETDAEQGETKDEGDK) is disordered.

Belongs to the RbfA family. As to quaternary structure, monomer. Binds 30S ribosomal subunits, but not 50S ribosomal subunits or 70S ribosomes.

It is found in the cytoplasm. One of several proteins that assist in the late maturation steps of the functional core of the 30S ribosomal subunit. Associates with free 30S ribosomal subunits (but not with 30S subunits that are part of 70S ribosomes or polysomes). Required for efficient processing of 16S rRNA. May interact with the 5'-terminal helix region of 16S rRNA. This Shewanella halifaxensis (strain HAW-EB4) protein is Ribosome-binding factor A.